A 604-amino-acid polypeptide reads, in one-letter code: 2-isopropylmalate synthase 2, mitochondrial (604 aa).

Residues 1–50 (MVKHSFIALAEHASKLRRSIPPVKLTYKNMLRDPSVKYRAFAPPKMVKRI) constitute a mitochondrion transit peptide. Residues 60–335 (PRWLSTDLRD…SPNLDFSDLT (276 aa)) form the Pyruvate carboxyltransferase domain. Residues D69, H274, H276, and N310 each contribute to the a divalent metal cation site.

It belongs to the alpha-IPM synthase/homocitrate synthase family. LeuA type 2 subfamily. Homodimer. The cofactor is a divalent metal cation.

It localises to the mitochondrion. It carries out the reaction 3-methyl-2-oxobutanoate + acetyl-CoA + H2O = (2S)-2-isopropylmalate + CoA + H(+). Its pathway is amino-acid biosynthesis; L-leucine biosynthesis; L-leucine from 3-methyl-2-oxobutanoate: step 1/4. In terms of biological role, catalyzes the condensation of the acetyl group of acetyl-CoA with 3-methyl-2-oxobutanoate (2-oxoisovalerate) to form 3-carboxy-3-hydroxy-4-methylpentanoate (2-isopropylmalate). Redundant to LEU4, responsible for about 20% of alpha-IPMS activity. Involved in leucine synthesis. The polypeptide is 2-isopropylmalate synthase 2, mitochondrial (Saccharomyces cerevisiae (strain ATCC 204508 / S288c) (Baker's yeast)).